Consider the following 489-residue polypeptide: Carboxyl-terminal-processing peptidase 1, chloroplastic (489 aa).

The segment covering 1–20 (MRLLLPFSSPLSATSSPSTP) has biased composition (low complexity). The segment at 1 to 27 (MRLLLPFSSPLSATSSPSTPQFIPELP) is disordered. The PDZ domain maps to 189 to 273 (FSRMSKYDIT…TFVVLKVKHG (85 aa)). Active-site charge relay system residues include serine 403 and lysine 428.

The protein belongs to the peptidase S41A family.

It is found in the plastid. Its subcellular location is the chloroplast thylakoid lumen. It carries out the reaction The enzyme shows specific recognition of a C-terminal tripeptide, Xaa-Yaa-Zaa, in which Xaa is preferably Ala or Leu, Yaa is preferably Ala or Tyr, and Zaa is preferably Ala, but then cleaves at a variable distance from the C-terminus. A typical cleavage is -Ala-Ala-|-Arg-Ala-Ala-Lys-Glu-Asn-Tyr-Ala-Leu-Ala-Ala.. Its function is as follows. Protease involved in the C-terminal processing of the chloroplastic D1 protein of photosystem II. This proteolytic processing is necessary to allow the light-driven assembly of the tetranuclear manganese cluster, which is responsible for photosynthetic water oxidation. This is Carboxyl-terminal-processing peptidase 1, chloroplastic (CTPA1) from Arabidopsis thaliana (Mouse-ear cress).